A 302-amino-acid chain; its full sequence is Mediator of RNA polymerase II transcription subunit 6 (302 aa).

Residues 260 to 281 (ATGQTGATSRFENGSSRSSTDA) form a disordered region.

It belongs to the Mediator complex subunit 6 family. Component of the Mediator complex.

Its subcellular location is the nucleus. Component of the Mediator complex, a coactivator involved in the regulated transcription of nearly all RNA polymerase II-dependent genes. Mediator functions as a bridge to convey information from gene-specific regulatory proteins to the basal RNA polymerase II transcription machinery. Mediator is recruited to promoters by direct interactions with regulatory proteins and serves as a scaffold for the assembly of a functional preinitiation complex with RNA polymerase II and the general transcription factors. This chain is Mediator of RNA polymerase II transcription subunit 6 (MED6), found in Candida glabrata (strain ATCC 2001 / BCRC 20586 / JCM 3761 / NBRC 0622 / NRRL Y-65 / CBS 138) (Yeast).